The sequence spans 201 residues: dITP/XTP pyrophosphatase (201 aa).

9 to 14 (TRNSGK) lines the substrate pocket. Mg(2+) is bound by residues Glu42 and Asp71. Asp71 serves as the catalytic Proton acceptor. Residues Ser72, 156–159 (FGYD), Lys178, and 183–184 (HR) contribute to the substrate site.

This sequence belongs to the HAM1 NTPase family. In terms of assembly, homodimer. Mg(2+) is required as a cofactor.

The catalysed reaction is XTP + H2O = XMP + diphosphate + H(+). It carries out the reaction dITP + H2O = dIMP + diphosphate + H(+). The enzyme catalyses ITP + H2O = IMP + diphosphate + H(+). Functionally, pyrophosphatase that catalyzes the hydrolysis of nucleoside triphosphates to their monophosphate derivatives, with a high preference for the non-canonical purine nucleotides XTP (xanthosine triphosphate), dITP (deoxyinosine triphosphate) and ITP. Seems to function as a house-cleaning enzyme that removes non-canonical purine nucleotides from the nucleotide pool, thus preventing their incorporation into DNA/RNA and avoiding chromosomal lesions. In Lactococcus lactis subsp. lactis (strain IL1403) (Streptococcus lactis), this protein is dITP/XTP pyrophosphatase (ynbD).